We begin with the raw amino-acid sequence, 731 residues long: Elongation factor 2 (731 aa).

The tr-type G domain maps to glutamate 19–lysine 234. GTP contacts are provided by residues alanine 28–threonine 35, aspartate 94–histidine 98, and asparagine 148–aspartate 151. Residue histidine 598 is modified to Diphthamide.

Belongs to the TRAFAC class translation factor GTPase superfamily. Classic translation factor GTPase family. EF-G/EF-2 subfamily.

The protein resides in the cytoplasm. Functionally, catalyzes the GTP-dependent ribosomal translocation step during translation elongation. During this step, the ribosome changes from the pre-translocational (PRE) to the post-translocational (POST) state as the newly formed A-site-bound peptidyl-tRNA and P-site-bound deacylated tRNA move to the P and E sites, respectively. Catalyzes the coordinated movement of the two tRNA molecules, the mRNA and conformational changes in the ribosome. The sequence is that of Elongation factor 2 from Methanobrevibacter ruminantium (strain ATCC 35063 / DSM 1093 / JCM 13430 / OCM 146 / M1) (Methanobacterium ruminantium).